Here is an 80-residue protein sequence, read N- to C-terminus: Trefoil factor 3 (80 aa).

Positions 1–21 are cleaved as a signal peptide; sequence MEARVLWLLALVLALGSSSLA. The P-type domain maps to 30-73; it reads NLCAVPAKNRVDCGYPEISPEQCVNRGCCFDSSIPEVPWCFKPL. 3 disulfide bridges follow: Cys-32/Cys-58, Cys-42/Cys-57, and Cys-52/Cys-69.

Monomer. Homodimer; disulfide-linked.

The protein resides in the secreted. Its subcellular location is the extracellular space. It localises to the extracellular matrix. It is found in the cytoplasm. Involved in the maintenance and repair of the intestinal mucosa. Promotes the mobility of epithelial cells in healing processes (motogen). The chain is Trefoil factor 3 (TFF3) from Felis catus (Cat).